The primary structure comprises 130 residues: Small ribosomal subunit protein uS8 (130 aa).

Belongs to the universal ribosomal protein uS8 family. In terms of assembly, part of the 30S ribosomal subunit. Contacts proteins S5 and S12.

Functionally, one of the primary rRNA binding proteins, it binds directly to 16S rRNA central domain where it helps coordinate assembly of the platform of the 30S subunit. The chain is Small ribosomal subunit protein uS8 from Shewanella halifaxensis (strain HAW-EB4).